The following is a 581-amino-acid chain: MRHCDSFCELIPMKGCEAMLEWMIDQGAGREPADIVLKGGRFLDLITGELVESDIAICEDRIVGTFGTYRGKHEIDVSGRIVVPGFIDTHLHIESSQVTPHEFDRCVLPQGVTTAICDPHEIANVLGAEGIRFFLDSALETVMDIRVQLSSCVPATHMETSGVELLIDDLLPFADHPKVIGLAEFMNFPGVLAKDPECMAKLRAFQGRHIDGHAPLLRGLDLNGYIAAGIRTEHEATNAEEALEKLRKGMYVLVREGSVSKDLKALMPIITERHAQFLALCTDDRNPLDIADQGHLDYLIRTAIAGGVEPLAIYRAASVSAARAFGLFDRGLVAPGQRADLVVVDSLEGCHAEIVLSAGRVVSEALFAARKPVAEVGRNSVKAPRVTASNFRSQSNSGKTRAIGIVPGKIITQNLEFDLKVGPNGVEPDLERDVVKVAVIERHGKNGNIATGFVHGFGLKAGAIASTVSHDSHNICVVGASDEDIATAANRLGEIEGGFVVVRDGKVLAEMPLPIAGLMSTEPYETVREALRKLRHAAEDLGSVLEEPFLQLAFIALPVIPHLKITDRGLVDVDKFEFVGN.

It belongs to the metallo-dependent hydrolases superfamily. Adenine deaminase family. Mn(2+) is required as a cofactor.

It carries out the reaction adenine + H2O + H(+) = hypoxanthine + NH4(+). The polypeptide is Adenine deaminase (Brucella suis biovar 1 (strain 1330)).